The sequence spans 166 residues: Apoptosis regulator M11L (166 aa).

Residues 138 to 160 (SGGCKISVYLTAAVVGFVAYGIL) traverse the membrane as a helical segment.

As to quaternary structure, interacts with host BAX; this interaction inhibits apoptosis activation. Interacts with host BAK1.

It localises to the host mitochondrion. It is found in the host membrane. Plays a role in the inhibition of mitochondria-mediated apoptosis by blocking the activation of mitochondria-tranlocalized BAX thereby maintaining pro-apoptotic BAX in an inactive conformation. Also inhibits apoptosis in a BAX-independent manner by interacting with and inhibiting host BAK1. This Myxoma virus (strain Lausanne) (MYXV) protein is Apoptosis regulator M11L (m011L).